The sequence spans 606 residues: Chaperone protein DnaK (606 aa).

The residue at position 174 (threonine 174) is a Phosphothreonine; by autocatalysis. The span at 579–593 (ASAAGNPGQGQTNEN) shows a compositional bias: polar residues. Positions 579–606 (ASAAGNPGQGQTNENPGGKTIDGDYKVN) are disordered.

This sequence belongs to the heat shock protein 70 family.

Its function is as follows. Acts as a chaperone. This Dictyoglomus thermophilum (strain ATCC 35947 / DSM 3960 / H-6-12) protein is Chaperone protein DnaK.